Reading from the N-terminus, the 194-residue chain is AN1-type zinc finger protein 2A (194 aa).

2 consecutive AN1-type zinc fingers follow at residues 4-52 and 94-142; these read PDLG…QKDV and KIFT…RPTI. Zn(2+) is bound by residues cysteine 10, cysteine 15, cysteine 25, cysteine 28, cysteine 33, histidine 36, histidine 42, cysteine 44, cysteine 100, cysteine 105, cysteine 115, cysteine 118, cysteine 123, histidine 126, histidine 132, and cysteine 134. A disordered region spans residues 145-164; sequence GCSPVTASESKPSGDPHPGS.

The protein localises to the cytoplasm. Its subcellular location is the nucleus. This Pongo abelii (Sumatran orangutan) protein is AN1-type zinc finger protein 2A (ZFAND2A).